Consider the following 247-residue polypeptide: MAALRLASFTLRPAAAAAASASSGATPAAPRSASFARAARGLPSLRLAPPRRRGDLVRPRAEAAADSYASALSEVAVENGTLEQTVSDLEKLQKIFADETVAEFFDNPTVPREEKTALIDEIAKSYELQPHVVNFINVVVDNFRATILPEIVVEFENIFNSLTGTEVATVTSVVQLESQDLAQIAQHVQKMTGAKNVRLKTQLDPELIAGFTVQYGRDGSSLIDMSVRKQIEEITSEFELPDVPLEV.

The transit peptide at 1 to 60 (MAALRLASFTLRPAAAAAASASSGATPAAPRSASFARAARGLPSLRLAPPRRRGDLVRPR) directs the protein to the chloroplast.

Belongs to the ATPase delta chain family. In terms of assembly, F-type ATPases have 2 components, CF(1) - the catalytic core - and CF(0) - the membrane proton channel. CF(1) has five subunits: alpha(3), beta(3), gamma(1), delta(1), epsilon(1). CF(0) has three main subunits: a, b and c.

Its subcellular location is the plastid. It is found in the chloroplast thylakoid membrane. Functionally, this protein seems to be part of the stalk that links CF(0) to CF(1). It either transmits conformational changes from CF(0) into CF(1) or is implicated in proton conduction. The sequence is that of ATP synthase delta chain, chloroplastic (ATPD) from Sorghum bicolor (Sorghum).